Reading from the N-terminus, the 758-residue chain is Relaxin receptor 1 (758 aa).

The Extracellular portion of the chain corresponds to 1-409 (MTSGPFFFCI…ENLLASIIQR (409 aa)). One can recognise an LDL-receptor class A domain in the interval 26 to 63 (SCPLGSFPCGNMSRCLPQLLHCNGVDDCGNRADEDHCG). Intrachain disulfides connect Cys27-Cys40, Cys34-Cys53, and Cys47-Cys62. N-linked (GlcNAc...) asparagine glycosylation occurs at Asn36. Leu45, Asn48, Val50, Asp52, Asp58, and Glu59 together coordinate Ca(2+). An N-linked (GlcNAc...) asparagine glycan is attached at Asn127. 10 LRR repeats span residues 127–148 (NVTV…GFRK), 151–172 (ELQK…AFRG), 175–196 (SLTK…VFED), 199–220 (RLEW…TFYG), 223–244 (SLIL…PLCQ), 248–269 (RLHW…TFIS), 272–293 (NLTV…AFTH), 296–317 (KLDE…IFKD), 320–341 (ELSQ…QFDC), and 344–365 (KLKS…MFRP). Asn264 and Asn272 each carry an N-linked (GlcNAc...) asparagine glycan. Asn325 carries an N-linked (GlcNAc...) asparagine glycan. An N-linked (GlcNAc...) asparagine glycan is attached at Asn368. A helical transmembrane segment spans residues 410–430 (VFVWVVSAITCFGNIFVICMR). The Cytoplasmic segment spans residues 431-443 (PYIRSENKLHAMS). A helical transmembrane segment spans residues 444–464 (IISLCCADCLMGVYLFVIGAF). Residues 465–486 (DLKFRGEYNKHAQPWMESVHCQ) are Extracellular-facing. Cys485 and Cys563 form a disulfide bridge. Residues 487-507 (FMGSLAILSTEVSVLLLTFLT) traverse the membrane as a helical segment. The Cytoplasmic segment spans residues 508–527 (LEKYICIVYPFRCLRPRKCR). A helical transmembrane segment spans residues 528–548 (TITVLIFIWIIGFIVAFAPLG). At 549–577 (NKEFFKNYYGTNGVCFPLHSEDTGSTGAQ) the chain is on the extracellular side. A helical membrane pass occupies residues 578–598 (IYSVVIFLGINLVAFIIIVFS). At 599 to 629 (YGSMFYSVHQSSVTVTEIQKQVKKEVVLAKR) the chain is on the cytoplasmic side. A helical membrane pass occupies residues 630–650 (FFFIVFTDALCWIPIFILKFL). Position 651 (Ser651) is a topological domain, extracellular. The helical transmembrane segment at 652–672 (LLQVEIPDSITSWVVIFILPI) threads the bilayer. The Cytoplasmic portion of the chain corresponds to 673 to 758 (NSALNPIIYT…SQSSRLNSYS (86 aa)).

This sequence belongs to the G-protein coupled receptor 1 family. In terms of assembly, interacts with C1QTNF8.

It localises to the cell membrane. Functionally, receptor for relaxins. The activity of this receptor is mediated by G proteins leading to stimulation of adenylate cyclase and an increase of cAMP. Binding of the ligand may also activate a tyrosine kinase pathway that inhibits the activity of a phosphodiesterase that degrades cAMP. In Mus musculus (Mouse), this protein is Relaxin receptor 1 (Rxfp1).